We begin with the raw amino-acid sequence, 152 residues long: Prefoldin subunit alpha (152 aa).

The interval 110-152 is disordered; that stretch reads ETQEEVDELESESQELEQQAQQMQQQMQQQQMQQMQQSQGDEE. The span at 111 to 124 shows a compositional bias: acidic residues; it reads TQEEVDELESESQE. Residues 125-152 are compositionally biased toward low complexity; the sequence is LEQQAQQMQQQMQQQQMQQMQQSQGDEE.

It belongs to the prefoldin alpha subunit family. In terms of assembly, heterohexamer of two alpha and four beta subunits.

It is found in the cytoplasm. Molecular chaperone capable of stabilizing a range of proteins. Seems to fulfill an ATP-independent, HSP70-like function in archaeal de novo protein folding. The protein is Prefoldin subunit alpha of Halorubrum lacusprofundi (strain ATCC 49239 / DSM 5036 / JCM 8891 / ACAM 34).